The primary structure comprises 239 residues: tRNA (guanine-N(1)-)-methyltransferase (239 aa).

Residues G108 and 127–132 (LGDFVL) each bind S-adenosyl-L-methionine.

This sequence belongs to the RNA methyltransferase TrmD family. As to quaternary structure, homodimer.

The protein resides in the cytoplasm. It catalyses the reaction guanosine(37) in tRNA + S-adenosyl-L-methionine = N(1)-methylguanosine(37) in tRNA + S-adenosyl-L-homocysteine + H(+). Functionally, specifically methylates guanosine-37 in various tRNAs. The chain is tRNA (guanine-N(1)-)-methyltransferase from Streptococcus thermophilus (strain ATCC BAA-250 / LMG 18311).